Consider the following 79-residue polypeptide: Moronecidin (79 aa).

Positions methionine 1–alanine 22 are cleaved as a signal peptide. Glycine 44 carries the glycine amide modification. Residues glycine 45–aspartate 79 form a disordered region. A propeptide spanning residues alanine 47–aspartate 79 is cleaved from the precursor. The span at glutamine 52–glutamine 69 shows a compositional bias: low complexity.

Expressed in mast cells in gill, skin and gut, and in lining blood vessels in the viscera. Also in intestine, spleen, anterior kidney, and blood cells.

It is found in the secreted. In terms of biological role, antimicrobial peptide with broad-spectrum activity against Gram-positive and Gram-negative bacteria as well as against a variety of fungi. Rapidly inactivates channel catfish herpesvirus (ED(50)=4 uM) and frog virus 3 (ED(50)=13 uM) over a wide temperature range. Seems to disrupt the membranes by adopting an alpha helical conformation and forming toroidal pores. Has hemolytic activity. This Morone saxatilis (Striped bass) protein is Moronecidin.